The sequence spans 205 residues: Small ribosomal subunit protein uS4 (205 aa).

Residues 1–16 show a composition bias toward basic and acidic residues; sequence MSKRESSKYKIDRRMG. The tract at residues 1 to 46 is disordered; it reads MSKRESSKYKIDRRMGENIWGRPKSPVNRREYGPGQHGQRRKGKLS. In terms of domain architecture, S4 RNA-binding spans 94–157; the sequence is SRLDAIVYRA…KQLVTVLEAV (64 aa).

The protein belongs to the universal ribosomal protein uS4 family. In terms of assembly, part of the 30S ribosomal subunit. Contacts protein S5. The interaction surface between S4 and S5 is involved in control of translational fidelity.

Functionally, one of the primary rRNA binding proteins, it binds directly to 16S rRNA where it nucleates assembly of the body of the 30S subunit. Its function is as follows. With S5 and S12 plays an important role in translational accuracy. This is Small ribosomal subunit protein uS4 from Rhizobium etli (strain CIAT 652).